The sequence spans 1133 residues: Protein TPR3 (1133 aa).

Positions 4–36 constitute a LisH domain; the sequence is LSRELVFLILQFLDEEKFKETVHKLEQESGFYF. The 59-residue stretch at 34-92 folds into the CTLH domain; that stretch reads FYFNMKYFEDEVINGNWDEVERYLGGFTKVDDNRYSMKIFFEIRKQKYLEALDKHDRSK. Residues 287–307 are disordered; that stretch reads PTTANPSMDYPSGDSDHVSKR. WD repeat units follow at residues 348–388, 410–449, 455–496, 499–540, 543–586, 590–629, 634–673, 771–810, 837–875, 878–918, 921–960, and 1014–1053; these read SQGS…RLVL, DPTV…DIRQ, AHVG…KQFT, GHEA…SRVD, APGH…VKRT, FRKR…LLTT, GGLP…RLLR, MRTS…RNSS, NPEE…TMTT, PPPP…VKSK, GHSK…KLKS, and ENSS…LQCR. The interval 1099–1133 is disordered; it reads ESERKWGNPPPAENGSTSALSTPPNGASSSDQPER. A compositionally biased stretch (polar residues) spans 1112–1133; the sequence is NGSTSALSTPPNGASSSDQPER.

Tetramer. Interacts with D53. Interacts with MODD and HDAC1. Interacts with WOX1. Interacts with MOF1. In terms of tissue distribution, expressed in panicles, stems, leaves, spikelets and seed endosperm.

In terms of biological role, probable downstream regulator of strigolactones signaling. Functions in a complex with MODD and HDAC1 to down-regulate the histone acetylation level at BZIP46 target genes. BZIP46 is a positive regulator of abscisic acid (ABA) signaling and drought stress tolerance. The sequence is that of Protein TPR3 from Oryza sativa subsp. japonica (Rice).